The sequence spans 387 residues: Sorting nexin-7 (387 aa).

The region spanning 30-151 is the PX domain; the sequence is KDLFITVDEP…IFLTAQAWEL (122 aa). A 1,2-diacyl-sn-glycero-3-phospho-(1D-myo-inositol-3-phosphate) contacts are provided by Arg-73, Gln-75, Lys-103, and Arg-117. The region spanning 178 to 387 is the BAR domain; that stretch reads GVKNRPEEFM…HLEETSEDKP (210 aa).

It belongs to the sorting nexin family. As to quaternary structure, heterodimer; heterodimerizes with SNX4.

The protein resides in the early endosome membrane. In terms of biological role, involved in the regulation of endocytosis and in several stages of intracellular trafficking. Together with SNX4, involved in autophagosome assembly by regulating trafficking and recycling of phospholipid scramblase ATG9A. The sequence is that of Sorting nexin-7 (SNX7) from Macaca fascicularis (Crab-eating macaque).